A 633-amino-acid chain; its full sequence is Probable potassium transport system protein Kup (633 aa).

The next 12 helical transmembrane spans lie at 21–41, 61–81, 107–127, 145–165, 176–196, 219–239, 255–275, 293–313, 345–365, 371–391, 402–422, and 427–447; these read LAVG…LYAF, LVSL…VLFL, TAVL…DAMI, PTLS…LFAI, FFGP…IMHI, GFLG…AEAL, WFVL…ALVL, ALLP…QAVI, IFLP…VLSF, LATA…IMAF, LPMA…FLGA, and IHDG…IMWT.

Belongs to the HAK/KUP transporter (TC 2.A.72) family.

The protein localises to the cell inner membrane. It catalyses the reaction K(+)(in) + H(+)(in) = K(+)(out) + H(+)(out). Its function is as follows. Transport of potassium into the cell. Likely operates as a K(+):H(+) symporter. The protein is Probable potassium transport system protein Kup of Rhizobium rhizogenes (strain K84 / ATCC BAA-868) (Agrobacterium radiobacter).